We begin with the raw amino-acid sequence, 186 residues long: Auxin-responsive protein IAA4 (186 aa).

An EAR-like (transcriptional repression) motif is present at residues 18–22 (LRLGL). The segment at 25 to 62 (TEETVSCGKSNKRVLPEATEKEIESTGKTETASPPKAQ) is disordered. The segment covering 38–51 (VLPEATEKEIESTG) has biased composition (basic and acidic residues). The PB1 domain maps to 88 to 175 (GNYVKVSMDG…SCKRLRIMKG (88 aa)).

The protein belongs to the Aux/IAA family. As to quaternary structure, homodimers and heterodimers. Interacts with TPL. Preferentially expressed in stems, leaves and flowers.

It is found in the nucleus. Functionally, aux/IAA proteins are short-lived transcriptional factors that function as repressors of early auxin response genes at low auxin concentrations. Repression is thought to result from the interaction with auxin response factors (ARFs), proteins that bind to the auxin-responsive promoter element (AuxRE). Formation of heterodimers with ARF proteins may alter their ability to modulate early auxin response genes expression. This chain is Auxin-responsive protein IAA4 (IAA4), found in Arabidopsis thaliana (Mouse-ear cress).